The primary structure comprises 576 residues: Mycobactin import ATP-binding/permease protein IrtB (576 aa).

Residues Met1–Val25 are Cytoplasmic-facing. In terms of domain architecture, ABC transmembrane type-1 spans Leu19–Ser299. A helical transmembrane segment spans residues Leu26–Phe46. Over Gly47 to Asp52 the chain is Periplasmic. A helical transmembrane segment spans residues Ala53–Thr73. Residues Thr74–Leu131 lie on the Cytoplasmic side of the membrane. The next 2 helical transmembrane spans lie at Leu132 to Val152 and Ser153 to Ala173. Topologically, residues Ser174–Gln241 are cytoplasmic. A helical transmembrane segment spans residues Leu242 to Leu262. Topologically, residues Thr263–Glu267 are periplasmic. The helical transmembrane segment at Leu268–Thr288 threads the bilayer. Residues Ser289–His576 are Cytoplasmic-facing. Positions Ile332–Arg565 constitute an ABC transporter domain. Gly364–Ser371 contacts ATP.

This sequence belongs to the ABC transporter superfamily. Siderophore-Fe(3+) uptake transporter (SIUT) (TC 3.A.1.21) family. As to quaternary structure, forms a heterodimer with IrtA.

It is found in the cell inner membrane. Its function is as follows. Part of the ABC transporter complex IrtAB involved in the import of iron-bound mycobactin (Fe-MBT) and carboxymycobactin (Fe-cMBT). Has a preference for Fe-MBT over Fe-cMBT. Transmembrane domains (TMD) form a pore in the membrane and the ATP-binding domain (NBD) is responsible for energy generation. The polypeptide is Mycobactin import ATP-binding/permease protein IrtB (Mycolicibacterium smegmatis (strain ATCC 700084 / mc(2)155) (Mycobacterium smegmatis)).